Consider the following 284-residue polypeptide: Formamidopyrimidine-DNA glycosylase (284 aa).

The active-site Schiff-base intermediate with DNA is the Pro2. Catalysis depends on Glu3, which acts as the Proton donor. Lys58 serves as the catalytic Proton donor; for beta-elimination activity. DNA is bound by residues His97, Arg120, and Arg165. Residues 250–284 form an FPG-type zinc finger; the sequence is FVYDRAGEPCKVCGTPVRQIVQGQRSTFYCTHCQH. The active-site Proton donor; for delta-elimination activity is the Arg274.

This sequence belongs to the FPG family. In terms of assembly, monomer. It depends on Zn(2+) as a cofactor.

It carries out the reaction Hydrolysis of DNA containing ring-opened 7-methylguanine residues, releasing 2,6-diamino-4-hydroxy-5-(N-methyl)formamidopyrimidine.. It catalyses the reaction 2'-deoxyribonucleotide-(2'-deoxyribose 5'-phosphate)-2'-deoxyribonucleotide-DNA = a 3'-end 2'-deoxyribonucleotide-(2,3-dehydro-2,3-deoxyribose 5'-phosphate)-DNA + a 5'-end 5'-phospho-2'-deoxyribonucleoside-DNA + H(+). Functionally, involved in base excision repair of DNA damaged by oxidation or by mutagenic agents. Acts as a DNA glycosylase that recognizes and removes damaged bases. Has a preference for oxidized purines, such as 7,8-dihydro-8-oxoguanine (8-oxoG). Has AP (apurinic/apyrimidinic) lyase activity and introduces nicks in the DNA strand. Cleaves the DNA backbone by beta-delta elimination to generate a single-strand break at the site of the removed base with both 3'- and 5'-phosphates. This is Formamidopyrimidine-DNA glycosylase from Cupriavidus pinatubonensis (strain JMP 134 / LMG 1197) (Cupriavidus necator (strain JMP 134)).